The following is a 340-amino-acid chain: NAD kinase (340 aa).

Catalysis depends on Asp66, which acts as the Proton acceptor. Residues 66-67 (DG), Arg71, 141-142 (ND), Lys152, Asp171, 182-187 (TAYAFS), and Ala206 contribute to the NAD(+) site. The disordered stretch occupies residues 321-340 (AGVAGTEPDKPGERDGKAGS). Residues 327–340 (EPDKPGERDGKAGS) show a composition bias toward basic and acidic residues.

The protein belongs to the NAD kinase family. It depends on a divalent metal cation as a cofactor.

Its subcellular location is the cytoplasm. The enzyme catalyses NAD(+) + ATP = ADP + NADP(+) + H(+). Involved in the regulation of the intracellular balance of NAD and NADP, and is a key enzyme in the biosynthesis of NADP. Catalyzes specifically the phosphorylation on 2'-hydroxyl of the adenosine moiety of NAD to yield NADP. In Bifidobacterium longum (strain DJO10A), this protein is NAD kinase.